The following is a 72-amino-acid chain: Protein SlyX homolog (72 aa).

This sequence belongs to the SlyX family.

In Bradyrhizobium diazoefficiens (strain JCM 10833 / BCRC 13528 / IAM 13628 / NBRC 14792 / USDA 110), this protein is Protein SlyX homolog.